The following is a 431-amino-acid chain: 3-deoxy-D-manno-octulosonic acid transferase (431 aa).

A helical; Signal-anchor transmembrane segment spans residues 5 to 27 (WLTSRLYDAFLVCAFFVSAPRIF). Glu67 serves as the catalytic Proton acceptor. CMP contacts are provided by residues 275 to 276 (PR), 315 to 317 (MGV), and 342 to 345 (NLLE).

It belongs to the glycosyltransferase group 1 family. Glycosyltransferase 30 subfamily.

It localises to the cell inner membrane. It carries out the reaction lipid IVA (E. coli) + CMP-3-deoxy-beta-D-manno-octulosonate = alpha-Kdo-(2-&gt;6)-lipid IVA (E. coli) + CMP + H(+). It catalyses the reaction alpha-Kdo-(2-&gt;6)-lipid IVA (E. coli) + CMP-3-deoxy-beta-D-manno-octulosonate = alpha-Kdo-(2-&gt;4)-alpha-Kdo-(2-&gt;6)-lipid IVA (E. coli) + CMP + H(+). The enzyme catalyses alpha-Kdo-(2-&gt;4)-alpha-Kdo-(2-&gt;6)-lipid IVA (E. coli) + CMP-3-deoxy-beta-D-manno-octulosonate = alpha-Kdo-(2-&gt;8)-alpha-Kdo-(2-&gt;4)-alpha-Kdo-(2-&gt;6)-lipid IVA (E. coli) + CMP + H(+). It functions in the pathway bacterial outer membrane biogenesis; LPS core biosynthesis. Functionally, involved in lipopolysaccharide (LPS) biosynthesis. Catalyzes the transfer of three 3-deoxy-D-manno-octulosonate (Kdo) residues from CMP-Kdo to lipid IV(A), the tetraacyldisaccharide-1,4'-bisphosphate precursor of lipid A. Thus generates the genus-specific LPS epitope of Chlamydia, composed of the trisaccharide alpha-Kdo-(2-&gt;8)-alpha-Kdo-(2-&gt;4)-alpha-Kdo. This Chlamydia trachomatis serovar A (strain ATCC VR-571B / DSM 19440 / HAR-13) protein is 3-deoxy-D-manno-octulosonic acid transferase (waaA).